A 657-amino-acid chain; its full sequence is MTRLAIGKPAPLGAHYDGQGVNFTLFSAHAERVELCVFDANGQEHRYDLPGHSGDIWHGYLPDARPGLRYGYRVHGPWQPAEGHRFNPAKLLIDPCARQIEGEFKDNPLLHAGHNEPDYRDNAAIAPKCVVVVDHYDWEDDAPPRTPWGSTIIYEAHVKGLTYLHPEIPVEIRGTYKALGHPVMINYLKQLGITALELLPVAQFASEPRLQRMGLSNYWGYNPVAMFALHPAYACSPETALHEFRDAIKALHKAGIEVILDIVLNHSAELDLDGPLFSLRGIDNRSYYWIREDGDYHNWTGCGNTLNLSHPAVVDYACACLRYWVETCHVDGFRFDLAAVMGRTPEFRQDAPLFTAIQNCPVLSQVKLIAEPWDIALGGYQVGNFPPLFAEWNDHFRDAARRFWLHYDLPLGAFAGRFAASSDVFKRNGRLPSAAINLVTAHDGFTLRDCVCFNHKHNEANGEENRDGTNNNYSNNHGKEGLGGSLDLVERRRDSIHALLTTLLLSQGTPMLLAGDEHGHSQHGNNNAYCQDNQLTWLDWSQASSGLTAFTAALIHLRKRIPALVENRWWEEGDGNVRWLNRYAQPLSTDEWQNGPKQLQILLSDRFLIAINATLEVTEIVLPAGEWHAIPPFAGEDNPVITAVWQGPAHGLCVFQR.

Residue Asp336 is the Nucleophile of the active site. Catalysis depends on Glu371, which acts as the Proton donor. Residues 458 to 467 show a composition bias toward basic and acidic residues; that stretch reads NEANGEENRD. The disordered stretch occupies residues 458–479; it reads NEANGEENRDGTNNNYSNNHGK.

It belongs to the glycosyl hydrolase 13 family.

The enzyme catalyses Hydrolysis of (1-&gt;6)-alpha-D-glucosidic linkages to branches with degrees of polymerization of three or four glucose residues in limit dextrin.. The protein operates within glycan degradation; glycogen degradation. Functionally, removes maltotriose and maltotetraose chains that are attached by 1,6-alpha-linkage to the limit dextrin main chain, generating a debranched limit dextrin. In Shigella sonnei (strain Ss046), this protein is Glycogen debranching enzyme.